Here is a 692-residue protein sequence, read N- to C-terminus: Elongation factor G (692 aa).

The 275-residue stretch at 8-282 (EKVRNIGIAA…AVVDYLPAPT (275 aa)) folds into the tr-type G domain. Residues 17 to 24 (AHIDAGKT), 81 to 85 (DTPGH), and 135 to 138 (NKMD) each bind GTP.

The protein belongs to the TRAFAC class translation factor GTPase superfamily. Classic translation factor GTPase family. EF-G/EF-2 subfamily.

Its subcellular location is the cytoplasm. Its function is as follows. Catalyzes the GTP-dependent ribosomal translocation step during translation elongation. During this step, the ribosome changes from the pre-translocational (PRE) to the post-translocational (POST) state as the newly formed A-site-bound peptidyl-tRNA and P-site-bound deacylated tRNA move to the P and E sites, respectively. Catalyzes the coordinated movement of the two tRNA molecules, the mRNA and conformational changes in the ribosome. The polypeptide is Elongation factor G (Trichormus variabilis (strain ATCC 29413 / PCC 7937) (Anabaena variabilis)).